Here is a 334-residue protein sequence, read N- to C-terminus: Phosphate acyltransferase (334 aa).

This sequence belongs to the PlsX family. As to quaternary structure, homodimer. Probably interacts with PlsY.

Its subcellular location is the cytoplasm. It carries out the reaction a fatty acyl-[ACP] + phosphate = an acyl phosphate + holo-[ACP]. It functions in the pathway lipid metabolism; phospholipid metabolism. Its function is as follows. Catalyzes the reversible formation of acyl-phosphate (acyl-PO(4)) from acyl-[acyl-carrier-protein] (acyl-ACP). This enzyme utilizes acyl-ACP as fatty acyl donor, but not acyl-CoA. This chain is Phosphate acyltransferase, found in Clostridium kluyveri (strain NBRC 12016).